A 550-amino-acid chain; its full sequence is Homeobox and leucine zipper protein Homez (550 aa).

The span at 1 to 10 (MVRGWEPPPG) shows a compositional bias: pro residues. Residues 1–36 (MVRGWEPPPGLDCAISEGHKSEGTMPPNKEASGLSS) are disordered. A DNA-binding region (homeobox 1) is located at residues 55–114 (WTQAAQTSELDSNEHLLKTFSYFPYPSLADIALLCLRYGLQMEKVKTWFMAQRLRCGISW). Residues 168–199 (GPPTLSKPTQTKGLKVEPEEPSQMPPLPQSHQ) are disordered. Residues Lys182, Lys200, and Lys202 each participate in a glycyl lysine isopeptide (Lys-Gly) (interchain with G-Cter in SUMO2) cross-link. A disordered region spans residues 223 to 265 (LQSSGLSKEQAGRGPNQSHGIGTASWNHSTTVPQPQARDKPPP). The segment covering 237 to 256 (PNQSHGIGTASWNHSTTVPQ) has biased composition (polar residues). Residue Ser351 is modified to Phosphoserine. 2 consecutive DNA-binding regions (homeobox) follow at residues 355–415 (QRQR…KHGQ) and 451–510 (TPPL…AEVV). Residues 358 to 363 (RKTKRK) carry the Nuclear localization signal motif. 2 disordered regions span residues 424 to 465 (VPGA…DIQP) and 512 to 550 (CLDE…IIQD). The residue at position 451 (Thr451) is a Phosphothreonine. The segment covering 452–463 (PPLPIPPPPPDI) has biased composition (pro residues). The segment covering 513–550 (LDEEEEEEEEELPEDDEEEEEEEEEDDDDDDDDVIIQD) has biased composition (acidic residues).

Homodimer or heterodimer (Potential). Interacts with HOXC8. As to expression, ubiquitous. Strongly expressed in adult testis and kidney as well as fetal lung and kidney.

It is found in the nucleus. In terms of biological role, may function as a transcriptional regulator. The sequence is that of Homeobox and leucine zipper protein Homez (HOMEZ) from Homo sapiens (Human).